Reading from the N-terminus, the 961-residue chain is Mitogen-activated protein kinase kinase kinase 13-B (961 aa).

The segment at 89 to 115 is disordered; it reads RDQDEPENTAPQGSSHSGDGGNNSANE. Over residues 101 to 114 the composition is skewed to low complexity; it reads GSSHSGDGGNNSAN. Residues 171 to 412 enclose the Protein kinase domain; sequence ISELQWLGSG…FRQILMHLDI (242 aa). ATP contacts are provided by residues 177–185 and Lys198; that span reads LGSGAQGAV. Asp282 (proton acceptor) is an active-site residue. Leucine-zipper stretches follow at residues 436–457 and 489–510; these read VKKH…DEEL and LSSI…EQTV. The stretch at 460–497 forms a coiled coil; that stretch reads RRREELRHALDIREHYERKLERANNLYMELSSIMLQLE. Disordered stretches follow at residues 507 to 644, 796 to 874, and 933 to 961; these read EQTV…ETSQ, TPPA…DVAC, and NAES…SSTW. Residues 563-580 are compositionally biased toward low complexity; sequence AEGSAASASPISGSPKTS. Basic residues predominate over residues 586–598; that stretch reads GRYRSKPRHRRGN. Low complexity predominate over residues 613–628; sequence QESPAPSQQSSQHQTP. Residues 813-826 are compositionally biased toward acidic residues; that stretch reads DSSEGEEGEVDSEV. The tract at residues 814–827 is acidic; that stretch reads SSEGEEGEVDSEVE. Positions 839-854 are enriched in polar residues; sequence STCQSYSTFSSENFSV. The span at 934–945 shows a compositional bias: acidic residues; sequence AESDCDSSEGEC. The span at 949–961 shows a compositional bias: polar residues; the sequence is TVRTNNPVNSSTW.

The protein belongs to the protein kinase superfamily. Ser/Thr protein kinase family.

The protein resides in the cytoplasm. The protein localises to the membrane. It carries out the reaction L-seryl-[protein] + ATP = O-phospho-L-seryl-[protein] + ADP + H(+). The enzyme catalyses L-threonyl-[protein] + ATP = O-phospho-L-threonyl-[protein] + ADP + H(+). May have a role in the JNK signaling pathway. The polypeptide is Mitogen-activated protein kinase kinase kinase 13-B (map3k13-b) (Xenopus laevis (African clawed frog)).